Consider the following 309-residue polypeptide: Elongation factor Ts (309 aa).

The segment at 82-85 (TDFV) is involved in Mg(2+) ion dislocation from EF-Tu.

Belongs to the EF-Ts family.

The protein localises to the cytoplasm. In terms of biological role, associates with the EF-Tu.GDP complex and induces the exchange of GDP to GTP. It remains bound to the aminoacyl-tRNA.EF-Tu.GTP complex up to the GTP hydrolysis stage on the ribosome. This Rickettsia massiliae (strain Mtu5) protein is Elongation factor Ts.